Reading from the N-terminus, the 171-residue chain is Spiderine-2b (171 aa).

The N-terminal stretch at 1 to 18 (MKFALVLLGFCAFYLVNA) is a signal peptide. Positions 19 to 58 (TGDLETELEASDLQELQEALDLIAETPLESLEAEELEEAR) are cleaved as a propeptide — removed in mature form. Positions 59-104 (KFKFPKINWGKLASKAKDVYKKGQKLAKNKNVKKALKYGKQLAENL) are linear cationic cytotoxin domain. The 54-residue stretch at 118–171 (NNKCWAIGTRCTDDCDCCPEHHCHCPAKSWTFGLIPCSCQVTESDKVNKCPPAE) folds into the Oxytoxin-type inhibitor cystine knot (ICK) domain. 5 disulfide bridges follow: cysteine 121–cysteine 135, cysteine 128–cysteine 140, cysteine 132–cysteine 167, cysteine 134–cysteine 156, and cysteine 142–cysteine 154.

The protein belongs to the spiderine family. Cationic/spiderine subfamily. In terms of tissue distribution, expressed by the venom gland.

The protein resides in the secreted. Its function is as follows. Has antimicrobial, insecticidal, cytolytic and cytotoxic activity. The chain is Spiderine-2b from Oxyopes takobius (Lynx spider).